Here is an 86-residue protein sequence, read N- to C-terminus: Small ribosomal subunit protein bS20 (86 aa).

The interval 1–26 (MANIKSAKKRAITSEKRRQHNASRRS) is disordered.

The protein belongs to the bacterial ribosomal protein bS20 family.

In terms of biological role, binds directly to 16S ribosomal RNA. This is Small ribosomal subunit protein bS20 from Photobacterium profundum (strain SS9).